A 375-amino-acid chain; its full sequence is Anhydro-N-acetylmuramic acid kinase (375 aa).

18-25 (GTSMDGID) is an ATP binding site.

The protein belongs to the anhydro-N-acetylmuramic acid kinase family.

It carries out the reaction 1,6-anhydro-N-acetyl-beta-muramate + ATP + H2O = N-acetyl-D-muramate 6-phosphate + ADP + H(+). The protein operates within amino-sugar metabolism; 1,6-anhydro-N-acetylmuramate degradation. It participates in cell wall biogenesis; peptidoglycan recycling. Its function is as follows. Catalyzes the specific phosphorylation of 1,6-anhydro-N-acetylmuramic acid (anhMurNAc) with the simultaneous cleavage of the 1,6-anhydro ring, generating MurNAc-6-P. Is required for the utilization of anhMurNAc either imported from the medium or derived from its own cell wall murein, and thus plays a role in cell wall recycling. The protein is Anhydro-N-acetylmuramic acid kinase of Rhodospirillum rubrum (strain ATCC 11170 / ATH 1.1.1 / DSM 467 / LMG 4362 / NCIMB 8255 / S1).